We begin with the raw amino-acid sequence, 474 residues long: ATP synthase subunit beta 1 (474 aa).

157–164 provides a ligand contact to ATP; sequence GGAGVGKT.

This sequence belongs to the ATPase alpha/beta chains family. As to quaternary structure, F-type ATPases have 2 components, CF(1) - the catalytic core - and CF(0) - the membrane proton channel. CF(1) has five subunits: alpha(3), beta(3), gamma(1), delta(1), epsilon(1). CF(0) has three main subunits: a(1), b(2) and c(9-12). The alpha and beta chains form an alternating ring which encloses part of the gamma chain. CF(1) is attached to CF(0) by a central stalk formed by the gamma and epsilon chains, while a peripheral stalk is formed by the delta and b chains.

The protein localises to the cell inner membrane. It catalyses the reaction ATP + H2O + 4 H(+)(in) = ADP + phosphate + 5 H(+)(out). In terms of biological role, produces ATP from ADP in the presence of a proton gradient across the membrane. The catalytic sites are hosted primarily by the beta subunits. The sequence is that of ATP synthase subunit beta 1 from Polaromonas naphthalenivorans (strain CJ2).